We begin with the raw amino-acid sequence, 169 residues long: Probable phospholipid hydroperoxide glutathione peroxidase (169 aa).

The active site involves Cys43.

Belongs to the glutathione peroxidase family.

The protein resides in the cytoplasm. It carries out the reaction a hydroperoxy polyunsaturated fatty acid + 2 glutathione = a hydroxy polyunsaturated fatty acid + glutathione disulfide + H2O. Its function is as follows. Protects cells and enzymes from oxidative damage, by catalyzing the reduction of hydrogen peroxide, lipid peroxides and organic hydroperoxide, by glutathione. This Nicotiana tabacum (Common tobacco) protein is Probable phospholipid hydroperoxide glutathione peroxidase.